We begin with the raw amino-acid sequence, 139 residues long: Ribulose bisphosphate carboxylase small subunit (139 aa).

Belongs to the RuBisCO small chain family. Heterohexadecamer of 8 large and 8 small subunits.

The protein localises to the plastid. The protein resides in the chloroplast. Its function is as follows. RuBisCO catalyzes two reactions: the carboxylation of D-ribulose 1,5-bisphosphate, the primary event in carbon dioxide fixation, as well as the oxidative fragmentation of the pentose substrate in the photorespiration process. Both reactions occur simultaneously and in competition at the same active site. Although the small subunit is not catalytic it is essential for maximal activity. The sequence is that of Ribulose bisphosphate carboxylase small subunit from Cylindrotheca sp. (strain N1) (Marine diatom).